The sequence spans 361 residues: Histidinol-phosphate aminotransferase (361 aa).

Residue Lys-218 is modified to N6-(pyridoxal phosphate)lysine.

The protein belongs to the class-II pyridoxal-phosphate-dependent aminotransferase family. Histidinol-phosphate aminotransferase subfamily. As to quaternary structure, homodimer. Pyridoxal 5'-phosphate serves as cofactor.

It carries out the reaction L-histidinol phosphate + 2-oxoglutarate = 3-(imidazol-4-yl)-2-oxopropyl phosphate + L-glutamate. It participates in amino-acid biosynthesis; L-histidine biosynthesis; L-histidine from 5-phospho-alpha-D-ribose 1-diphosphate: step 7/9. This chain is Histidinol-phosphate aminotransferase, found in Dinoroseobacter shibae (strain DSM 16493 / NCIMB 14021 / DFL 12).